The chain runs to 318 residues: MEWENQTILVEFFLKGHSVHPRLELLFFVLIFIMYVVILLGNGTLILISILDPHLHTPMYFFLGNLSFLDICYTTTSIPSTLVSFLSERKTISFSGCAVQMFLGLAMGTTECVLLGMMAFDRYVAICNPLRYPIIMSKNAYVPMAVGSWFAGIVNSAVQTTFVVQLPFCRKNVINHFSCEILAVMKLACADISGNEFLMLVATILFTLMPLLLIVISYSLIISSILKIHSSEGRSKAFSTCSAHLTVVIIFYGTILFMYMKPKSKETLNSDDLDATDKIISMFYGVMTPMMNPLIYSLRNKDVKEAVKHLPNRRFFSK.

Topologically, residues 1 to 25 are extracellular; that stretch reads MEWENQTILVEFFLKGHSVHPRLEL. Asn-5 is a glycosylation site (N-linked (GlcNAc...) asparagine). Residues 26 to 46 traverse the membrane as a helical segment; the sequence is LFFVLIFIMYVVILLGNGTLI. At 47–54 the chain is on the cytoplasmic side; the sequence is LISILDPH. A helical membrane pass occupies residues 55 to 75; the sequence is LHTPMYFFLGNLSFLDICYTT. Topologically, residues 76-99 are extracellular; the sequence is TSIPSTLVSFLSERKTISFSGCAV. Cysteines 97 and 189 form a disulfide. The chain crosses the membrane as a helical span at residues 100–120; the sequence is QMFLGLAMGTTECVLLGMMAF. Topologically, residues 121–139 are cytoplasmic; sequence DRYVAICNPLRYPIIMSKN. Residues 140–160 traverse the membrane as a helical segment; sequence AYVPMAVGSWFAGIVNSAVQT. Topologically, residues 161-197 are extracellular; the sequence is TFVVQLPFCRKNVINHFSCEILAVMKLACADISGNEF. A helical transmembrane segment spans residues 198 to 217; the sequence is LMLVATILFTLMPLLLIVIS. The Cytoplasmic portion of the chain corresponds to 218 to 237; sequence YSLIISSILKIHSSEGRSKA. A helical membrane pass occupies residues 238 to 258; the sequence is FSTCSAHLTVVIIFYGTILFM. The Extracellular portion of the chain corresponds to 259–277; sequence YMKPKSKETLNSDDLDATD. A helical membrane pass occupies residues 278–298; that stretch reads KIISMFYGVMTPMMNPLIYSL. Residues 299-318 lie on the Cytoplasmic side of the membrane; sequence RNKDVKEAVKHLPNRRFFSK.

This sequence belongs to the G-protein coupled receptor 1 family.

It localises to the cell membrane. Functionally, odorant receptor. This Homo sapiens (Human) protein is Olfactory receptor 13C9 (OR13C9).